Here is a 241-residue protein sequence, read N- to C-terminus: MSVRKLSALSLSIGGVPLIPSVSLVAAANGESRDCHGTICHPVNEFCYVATERCHPCIEVCNNQTHNYDAFLCAKECSAYKTFEPLKAEMLDIQNTQQLILLLLTILLVLIALRCAFQFLRWLIGNRCFQKLMRRLQSKAYPHPATANGKDLNATTIQNLNAINHPGSDLERAQSQIYSVAGAAEGSVVTMTTPVSTRYPAENSTTPTTVMTEIGYGYDNQAMVVTPVSEKPSAATIPVAF.

The first 27 residues, 1 to 27, serve as a signal peptide directing secretion; sequence MSVRKLSALSLSIGGVPLIPSVSLVAA. Residues 28–98 are Extracellular-facing; that stretch reads ANGESRDCHG…EMLDIQNTQQ (71 aa). 4 disulfide bridges follow: C35/C47, C40/C54, C57/C77, and C61/C73. N-linked (GlcNAc...) asparagine glycosylation is present at N63. The helical transmembrane segment at 99-119 threads the bilayer; the sequence is LILLLLTILLVLIALRCAFQF. At 120–241 the chain is on the cytoplasmic side; sequence LRWLIGNRCF…PSAATIPVAF (122 aa).

Interacts (via extracellular cysteine-rich domain) with egr (via secreted TNF-homology soluble form); forms heterohexamers when 3 copies associate with egr trimers. Interacts with Traf6/TRAF2 and veli (via PDZ domain). N-glycosylated on Asn-63. Glycosylation regulates ligand binding, specifically reducing affinity for the TNF egr, thereby inhibiting activation of JNK signaling. As to expression, expressed in the adult midgut; under normal conditions expressed at lower levels than the other TNF receptor wgn.

It is found in the apical cell membrane. It localises to the cytoplasmic vesicle membrane. In terms of biological role, acts as a receptor for TNF-cytokine egr. Plays a role in activation of JNK signaling and is required for egr-induced apoptosis, including in wing imaginal discs during development. May also play an egr-independent role in cell proliferation. TNF receptor involved in triggering JNK-dependent proliferation of the enteroblast-enterocyte lineage in response to stress-induced release of egr by intestinal stem cells and enteroblasts. Involved in regulation of insulin production in response to dietary protein shortage keeping systemic growth in check. Activation in brain insulin producing cells through binding of egr released into the hemolymph in response to dietary amino acid shortage, results in JNK-dependent inhibition of insulin production. The sequence is that of Tumor necrosis factor receptor superfamily member grnd from Drosophila melanogaster (Fruit fly).